Reading from the N-terminus, the 320-residue chain is Nucleotide-binding protein Acid_7395 (320 aa).

Residues 1–34 (MPLRKKGAATTKAAATRKDSAKAPASSKRKDAPQ) are disordered. 44-51 (GLSGSGKG) is an ATP binding site. GTP is bound at residue 94-97 (DIRE).

It belongs to the RapZ-like family.

Functionally, displays ATPase and GTPase activities. The sequence is that of Nucleotide-binding protein Acid_7395 from Solibacter usitatus (strain Ellin6076).